Consider the following 492-residue polypeptide: Ketol-acid reductoisomerase (NADP(+)) (492 aa).

The 194-residue stretch at 15 to 208 folds into the KARI N-terminal Rossmann domain; the sequence is AQLGKCRFMA…GGHRAGVLEF (194 aa). Residues 45–48, R68, R76, S78, and 108–110 contribute to the NADP(+) site; these read CGAQ and DKQ. Residue H132 is part of the active site. An NADP(+)-binding site is contributed by G158. KARI C-terminal knotted domains are found at residues 209–344 and 345–485; these read SFVA…NAPQ and FEGK…MTDM. D217, E221, E389, and E393 together coordinate Mg(2+). S414 is a binding site for substrate.

The protein belongs to the ketol-acid reductoisomerase family. Mg(2+) is required as a cofactor.

The catalysed reaction is (2R)-2,3-dihydroxy-3-methylbutanoate + NADP(+) = (2S)-2-acetolactate + NADPH + H(+). It carries out the reaction (2R,3R)-2,3-dihydroxy-3-methylpentanoate + NADP(+) = (S)-2-ethyl-2-hydroxy-3-oxobutanoate + NADPH + H(+). It participates in amino-acid biosynthesis; L-isoleucine biosynthesis; L-isoleucine from 2-oxobutanoate: step 2/4. The protein operates within amino-acid biosynthesis; L-valine biosynthesis; L-valine from pyruvate: step 2/4. Functionally, involved in the biosynthesis of branched-chain amino acids (BCAA). Catalyzes an alkyl-migration followed by a ketol-acid reduction of (S)-2-acetolactate (S2AL) to yield (R)-2,3-dihydroxy-isovalerate. In the isomerase reaction, S2AL is rearranged via a Mg-dependent methyl migration to produce 3-hydroxy-3-methyl-2-ketobutyrate (HMKB). In the reductase reaction, this 2-ketoacid undergoes a metal-dependent reduction by NADPH to yield (R)-2,3-dihydroxy-isovalerate. This is Ketol-acid reductoisomerase (NADP(+)) from Yersinia pestis bv. Antiqua (strain Antiqua).